The following is a 206-amino-acid chain: Protein GrpE (206 aa).

The interval 1–36 (MTDSNGPKDNNQDQAQAAADPVVSKPYIMPDDPEDG) is disordered.

Belongs to the GrpE family. Homodimer.

It is found in the cytoplasm. Participates actively in the response to hyperosmotic and heat shock by preventing the aggregation of stress-denatured proteins, in association with DnaK and GrpE. It is the nucleotide exchange factor for DnaK and may function as a thermosensor. Unfolded proteins bind initially to DnaJ; upon interaction with the DnaJ-bound protein, DnaK hydrolyzes its bound ATP, resulting in the formation of a stable complex. GrpE releases ADP from DnaK; ATP binding to DnaK triggers the release of the substrate protein, thus completing the reaction cycle. Several rounds of ATP-dependent interactions between DnaJ, DnaK and GrpE are required for fully efficient folding. The polypeptide is Protein GrpE (Rhodopseudomonas palustris (strain HaA2)).